A 446-amino-acid chain; its full sequence is Elongation factor 1-alpha (446 aa).

The region spanning 5-230 (KNHLNLVVIG…DALDQPKRPK (226 aa)) is the tr-type G domain. Positions 14–21 (GHVDSGKS) are G1. 14 to 21 (GHVDSGKS) is a GTP binding site. Residues 70–74 (GITID) form a G2 region. A G3 region spans residues 91 to 94 (DAPG). GTP contacts are provided by residues 91-95 (DAPGH) and 153-156 (NKMD). The tract at residues 153-156 (NKMD) is G4. Residues 194-196 (SGW) are G5.

This sequence belongs to the TRAFAC class translation factor GTPase superfamily. Classic translation factor GTPase family. EF-Tu/EF-1A subfamily.

Its subcellular location is the cytoplasm. This protein promotes the GTP-dependent binding of aminoacyl-tRNA to the A-site of ribosomes during protein biosynthesis. This Stylonychia lemnae (Ciliate) protein is Elongation factor 1-alpha (EFAA).